Here is a 1216-residue protein sequence, read N- to C-terminus: AF4/FMR2 family member 1 (1216 aa).

Disordered stretches follow at residues 1-52 (MAAH…KGDE), 68-104 (KEFLSSKSHPHRLDGSEDRPGKPRYPLGHDRGNGAAS), 116-139 (IHTSAPGSRPVGNISHSPKMAQPR), 152-217 (PRLT…VSSK), 244-275 (AVTSLGSAPPQPPCQTFPPPPLPSKSAAMQQK), and 352-728 (SWPP…RTSG). 2 stretches are compositionally biased toward basic and acidic residues: residues 9 to 35 (NEDRNLLRIREKERRNQEAHQEKEAFP) and 78 to 99 (HRLDGSEDRPGKPRYPLGHDRG). Positions 166 to 182 (RKCDRRAEGDSAPERKL) are enriched in basic and acidic residues. A phosphoserine mark is found at Ser183, Ser191, and Ser197. Residues 207–217 (SKAHSSGVSSK) are compositionally biased toward low complexity. Positions 252–266 (PPQPPCQTFPPPPLP) are enriched in pro residues. Over residues 383-406 (PATQSQKQYDTPSKTHPNPQQGTS) the composition is skewed to polar residues. Residues 408–424 (LEDDLQLSDSEDSDTEQ) are compositionally biased toward acidic residues. A compositionally biased stretch (pro residues) spans 429–438 (PPSPPAPPSA). Acidic residues predominate over residues 457–484 (ESSESDSSSDSESESSSSDSEEEEENEP). Lys682 carries the post-translational modification N6-acetyllysine. Positions 710–728 (SQGPSHSSRGSSGSVRTSG) are enriched in low complexity. Phosphoserine occurs at positions 755 and 760. 2 disordered regions span residues 777-969 (RIPQ…RQQA) and 1094-1125 (APSPCTARSTGVPSPLSPMPSPASSVGSQSSA). Basic and acidic residues predominate over residues 789–808 (RKAEDKQLSAGKKQDSETKS). 4 stretches are compositionally biased toward low complexity: residues 824-846 (KKSTVTRDTNWISRRASSSSSHT), 867-886 (PPASASSVSSSSSSQKPSRP), 902-915 (PPRSASSTKSSSTD), and 1115-1125 (PASSVGSQSSA).

This sequence belongs to the AF4 family. Component of the super elongation complex (SEC), at least composed of EAF1, EAF2, CDK9, MLLT3/AF9, AFF (AFF1 or AFF4), the P-TEFb complex and ELL (ELL, ELL2 or ELL3).

The protein localises to the nucleus. The chain is AF4/FMR2 family member 1 (Aff1) from Mus musculus (Mouse).